We begin with the raw amino-acid sequence, 149 residues long: Ribonuclease H (149 aa).

The RNase H type-1 domain maps to 1 to 141 (MKTVTLFSDG…CDTMAREKAT (141 aa)). Mg(2+) contacts are provided by aspartate 9, glutamate 47, aspartate 69, and aspartate 133.

Belongs to the RNase H family. As to quaternary structure, monomer. Requires Mg(2+) as cofactor.

It is found in the cytoplasm. The catalysed reaction is Endonucleolytic cleavage to 5'-phosphomonoester.. Endonuclease that specifically degrades the RNA of RNA-DNA hybrids. The protein is Ribonuclease H of Campylobacter curvus (strain 525.92).